Here is a 365-residue protein sequence, read N- to C-terminus: Gibberellin 20 oxidase 1-A (365 aa).

A Fe2OG dioxygenase domain is found at 199-299 (GNDSIMRLNY…RKSLAFFLCP (101 aa)). His224, Asp226, and His280 together coordinate Fe cation. Residue Arg290 is part of the active site.

It belongs to the iron/ascorbate-dependent oxidoreductase family. GA20OX subfamily. The cofactor is Fe cation. L-ascorbate is required as a cofactor. As to expression, expressed in nodes and the ear of the elongating stem.

It catalyses the reaction gibberellin A12 + 2 2-oxoglutarate + 3 O2 + H(+) = gibberellin A9 + 2 succinate + 3 CO2 + 2 H2O. It carries out the reaction gibberellin A53 + 2 2-oxoglutarate + 3 O2 + H(+) = gibberellin A20 + 2 succinate + 3 CO2 + 2 H2O. Key oxidase enzyme in the biosynthesis of gibberellin that catalyzes the conversion of GA12 and GA53 to GA9 and GA20 respectively, via a three-step oxidation at C-20 of the GA skeleton. This is Gibberellin 20 oxidase 1-A (GA20ox1A) from Triticum aestivum (Wheat).